Reading from the N-terminus, the 339-residue chain is 5-dehydro-2-deoxygluconokinase (339 aa).

The protein belongs to the carbohydrate kinase PfkB family.

The enzyme catalyses 5-dehydro-2-deoxy-D-gluconate + ATP = 6-phospho-5-dehydro-2-deoxy-D-gluconate + ADP + H(+). The protein operates within polyol metabolism; myo-inositol degradation into acetyl-CoA; acetyl-CoA from myo-inositol: step 5/7. Functionally, catalyzes the phosphorylation of 5-dehydro-2-deoxy-D-gluconate (2-deoxy-5-keto-D-gluconate or DKG) to 6-phospho-5-dehydro-2-deoxy-D-gluconate (DKGP). The chain is 5-dehydro-2-deoxygluconokinase from Clostridium botulinum (strain Alaska E43 / Type E3).